The chain runs to 141 residues: Small ribosomal subunit protein uS11 (141 aa).

It belongs to the universal ribosomal protein uS11 family. In terms of assembly, part of the 30S ribosomal subunit.

Its function is as follows. Located on the platform of the 30S subunit. The sequence is that of Small ribosomal subunit protein uS11 from Pyrobaculum calidifontis (strain DSM 21063 / JCM 11548 / VA1).